The following is a 107-amino-acid chain: Putative double-stranded DNA mimic protein HSM_1473 (107 aa).

The protein belongs to the putative dsDNA mimic protein family.

May act as a double-stranded DNA (dsDNA) mimic. Probably regulates the activity of a dsDNA-binding protein. The chain is Putative double-stranded DNA mimic protein HSM_1473 from Histophilus somni (strain 2336) (Haemophilus somnus).